The chain runs to 498 residues: Isoflavone 2'-hydroxylase (498 aa).

Residues 3–23 traverse the membrane as a helical segment; the sequence is ILSYLCYSLFYLSIFFIIRLL. Residue Cys436 participates in heme binding.

The protein belongs to the cytochrome P450 family. Heme is required as a cofactor. As to expression, expressed constitutively in roots, but present at very low levels in uninfected stems and leaves.

It localises to the endoplasmic reticulum membrane. It carries out the reaction formononetin + reduced [NADPH--hemoprotein reductase] + O2 = 2'-hydroxyformononetin + oxidized [NADPH--hemoprotein reductase] + H2O + H(+). In terms of biological role, involved in the biosynthesis of the pterocarpin phytoalexins. Acts on isoflavones with a 4'-methoxy group on the B-ring, such as formononetin and biochanin A, and on pseudobaptigenin. Has a low activity with daidzein and genistein and no activity with the 7-O-methylated isoflavonoids isoformononetin and prunetin. This chain is Isoflavone 2'-hydroxylase, found in Medicago truncatula (Barrel medic).